A 743-amino-acid chain; its full sequence is Keratin, type I cytoskeletal 9 (743 aa).

A compositionally biased stretch (low complexity) spans 1-16 (MSCRQSSSSFWSSSSS). The disordered stretch occupies residues 1–46 (MSCRQSSSSFWSSSSSCGGGGGRGGSGGSMRSSFSRSSRAGGGGGG). A head region spans residues 1–130 (MSCRQSSSSF…GGEGGILNTN (130 aa)). Residues S14 and S16 each carry the phosphoserine modification. The span at 17–28 (CGGGGGRGGSGG) shows a compositional bias: gly residues. The segment covering 29 to 39 (SMRSSFSRSSR) has biased composition (low complexity). Phosphoserine occurs at positions 55 and 155. The segment at 131–166 (EKIVMQNLNSRLASYMEKVLELEESNTAMEKQIQDW) is coil 1A. Positions 131-443 (EKIVMQNLNS…ELLEGGQQDF (313 aa)) constitute an IF rod domain. Residues 167–185 (YSKRGPKVFQKDNTHYYDT) are linker 1. Positions 186 to 277 (IEDLKDRIVD…KNHKEEMSQL (92 aa)) are coil 1B. The segment at 278–300 (TGQNDGDVNVEINVAPSTDLTRV) is linker 12. The interval 301 to 439 (LNDMREEYEQ…ETYRELLEGG (139 aa)) is coil 2. 2 disordered regions span residues 440–468 (QQDF…GSYG) and 501–743 (GGSG…KMRY). The interval 440-709 (QQDFESSGAG…GGGSGSGGGS (270 aa)) is tail. Gly residues-rich tracts occupy residues 449-468 (GQIG…GSYG) and 501-717 (GGSG…GGGN).

Belongs to the intermediate filament family. As to quaternary structure, heterotetramer of two type I and two type II keratins. As to expression, expressed in footpad epidermis and testis (at protein level).

Its function is as follows. May serve an important special function either in the mature palmar and plantar skin tissue or in the morphogenetic program of the formation of these tissues. Plays a role in keratin filament assembly. Plays an essential role in the correct development of sperm. The protein is Keratin, type I cytoskeletal 9 of Mus musculus (Mouse).